The chain runs to 428 residues: Enolase 3 (428 aa).

Q163 lines the (2R)-2-phosphoglycerate pocket. E205 serves as the catalytic Proton donor. Positions 242, 286, and 313 each coordinate Mg(2+). Residues K338, R367, S368, and K389 each contribute to the (2R)-2-phosphoglycerate site. The Proton acceptor role is filled by K338.

This sequence belongs to the enolase family. It depends on Mg(2+) as a cofactor.

It is found in the cytoplasm. The protein localises to the secreted. Its subcellular location is the cell surface. The catalysed reaction is (2R)-2-phosphoglycerate = phosphoenolpyruvate + H2O. It participates in carbohydrate degradation; glycolysis; pyruvate from D-glyceraldehyde 3-phosphate: step 4/5. Its function is as follows. Catalyzes the reversible conversion of 2-phosphoglycerate (2-PG) into phosphoenolpyruvate (PEP). It is essential for the degradation of carbohydrates via glycolysis. In Lactobacillus johnsonii (strain CNCM I-12250 / La1 / NCC 533), this protein is Enolase 3.